Reading from the N-terminus, the 470-residue chain is Cell division protein FtsA (470 aa).

A disordered region spans residues 416–470; that stretch reads NKKDTHENEVESTDEEIYQSEDNHQEHKQNHEHVQDKDKDKEESKFKKLMKSLFE. Residues 425–434 show a composition bias toward acidic residues; that stretch reads VESTDEEIYQ. Basic and acidic residues predominate over residues 436–461; sequence EDNHQEHKQNHEHVQDKDKDKEESKF.

It belongs to the FtsA/MreB family. As to quaternary structure, self-interacts. Interacts with FtsZ.

The protein localises to the cell membrane. Cell division protein that is involved in the assembly of the Z ring. May serve as a membrane anchor for the Z ring. This Staphylococcus aureus (strain NCTC 8325 / PS 47) protein is Cell division protein FtsA.